Reading from the N-terminus, the 511-residue chain is Lysine--tRNA ligase 2 (511 aa).

Over residues 1–11 (MTMEINNTDPS) the composition is skewed to polar residues. Residues 1-21 (MTMEINNTDPSENMPLPDDVD) are disordered. Glutamate 421 and glutamate 428 together coordinate Mg(2+).

This sequence belongs to the class-II aminoacyl-tRNA synthetase family. Homodimer. It depends on Mg(2+) as a cofactor.

Its subcellular location is the cytoplasm. It catalyses the reaction tRNA(Lys) + L-lysine + ATP = L-lysyl-tRNA(Lys) + AMP + diphosphate. The protein is Lysine--tRNA ligase 2 of Methanosarcina acetivorans (strain ATCC 35395 / DSM 2834 / JCM 12185 / C2A).